We begin with the raw amino-acid sequence, 164 residues long: Phosphopantetheine adenylyltransferase (164 aa).

Serine 9 lines the substrate pocket. ATP is bound by residues serine 9–phenylalanine 10 and histidine 17. Lysine 41, leucine 73, and lysine 87 together coordinate substrate. Residues glycine 88–arginine 90, glutamate 98, and tyrosine 123–serine 129 each bind ATP.

The protein belongs to the bacterial CoaD family. In terms of assembly, homohexamer. It depends on Mg(2+) as a cofactor.

Its subcellular location is the cytoplasm. It carries out the reaction (R)-4'-phosphopantetheine + ATP + H(+) = 3'-dephospho-CoA + diphosphate. The protein operates within cofactor biosynthesis; coenzyme A biosynthesis; CoA from (R)-pantothenate: step 4/5. Reversibly transfers an adenylyl group from ATP to 4'-phosphopantetheine, yielding dephospho-CoA (dPCoA) and pyrophosphate. In Clostridium perfringens (strain 13 / Type A), this protein is Phosphopantetheine adenylyltransferase.